We begin with the raw amino-acid sequence, 147 residues long: Globin (147 aa).

Residues 2 to 147 (SFSAAQVDTV…SVANGIGQYQ (146 aa)) enclose the Globin domain. 2 residues coordinate heme b: His-64 and His-95.

Belongs to the globin family. As to quaternary structure, homodimer or homooligomer.

The sequence is that of Globin from Aequiyoldia eightsii (Antarctic yoldia).